Here is a 263-residue protein sequence, read N- to C-terminus: Cysteine-rich repeat secretory protein 55 (263 aa).

An N-terminal signal peptide occupies residues 1 to 20; it reads MKTLVVKCFLLLALVCSCRA. 2 Gnk2-homologous domains span residues 22–126 and 132–240; these read DSIW…QENF and TGAG…FYPF.

The protein belongs to the cysteine-rich repeat secretory protein family.

The protein resides in the secreted. This chain is Cysteine-rich repeat secretory protein 55 (CRRSP55), found in Arabidopsis thaliana (Mouse-ear cress).